The sequence spans 209 residues: Ribosomal RNA large subunit methyltransferase E (209 aa).

Positions 63, 65, 83, 99, and 124 each coordinate S-adenosyl-L-methionine. Lysine 164 acts as the Proton acceptor in catalysis.

Belongs to the class I-like SAM-binding methyltransferase superfamily. RNA methyltransferase RlmE family.

The protein resides in the cytoplasm. The enzyme catalyses uridine(2552) in 23S rRNA + S-adenosyl-L-methionine = 2'-O-methyluridine(2552) in 23S rRNA + S-adenosyl-L-homocysteine + H(+). In terms of biological role, specifically methylates the uridine in position 2552 of 23S rRNA at the 2'-O position of the ribose in the fully assembled 50S ribosomal subunit. The chain is Ribosomal RNA large subunit methyltransferase E from Aliivibrio fischeri (strain ATCC 700601 / ES114) (Vibrio fischeri).